A 204-amino-acid chain; its full sequence is uncharacterized protein (204 aa).

The N-terminal stretch at 1-21 (MIKKFLLFAMLNIFLTNKAHS) is a signal peptide.

This is an uncharacterized protein from Borreliella burgdorferi (strain ATCC 35210 / DSM 4680 / CIP 102532 / B31) (Borrelia burgdorferi).